We begin with the raw amino-acid sequence, 58 residues long: Large ribosomal subunit protein uL30 (58 aa).

Belongs to the universal ribosomal protein uL30 family. As to quaternary structure, part of the 50S ribosomal subunit.

The polypeptide is Large ribosomal subunit protein uL30 (Zymomonas mobilis subsp. mobilis (strain ATCC 31821 / ZM4 / CP4)).